The primary structure comprises 200 residues: Probable GTP-binding protein EngB (200 aa).

In terms of domain architecture, EngB-type G spans 30-199 (KKAEVAIAGR…EDYIYENWIK (170 aa)). GTP contacts are provided by residues 38–45 (GRSNAGKS), 64–68 (GKTRL), 82–85 (DMPG), 149–152 (TKAD), and 178–180 (VSA). Residues S45 and T66 each coordinate Mg(2+).

The protein belongs to the TRAFAC class TrmE-Era-EngA-EngB-Septin-like GTPase superfamily. EngB GTPase family. It depends on Mg(2+) as a cofactor.

Its function is as follows. Necessary for normal cell division and for the maintenance of normal septation. In Bdellovibrio bacteriovorus (strain ATCC 15356 / DSM 50701 / NCIMB 9529 / HD100), this protein is Probable GTP-binding protein EngB.